The primary structure comprises 133 residues: Small ribosomal subunit protein uS11 (133 aa).

The disordered stretch occupies residues 114–133 (VTPIPHDGTRPPGGKRGRRV).

The protein belongs to the universal ribosomal protein uS11 family. As to quaternary structure, part of the 30S ribosomal subunit.

In terms of biological role, located on the platform of the 30S subunit. The polypeptide is Small ribosomal subunit protein uS11 (Archaeoglobus fulgidus (strain ATCC 49558 / DSM 4304 / JCM 9628 / NBRC 100126 / VC-16)).